Reading from the N-terminus, the 196-residue chain is Holliday junction branch migration complex subunit RuvA (196 aa).

A domain I region spans residues 1 to 62 (MYEYINGLIT…ENDISLYGFI (62 aa)). Residues 63–141 (DADEKALFNK…ELASKTGMVD (79 aa)) form a domain II region. The segment at 142 to 148 (SSSNPEQ) is flexible linker. Residues 148–196 (QSQALDDALEALLALGYTAKDVKAVAQIIGRNSDTTDGYIRSALKLLVK) are domain III.

This sequence belongs to the RuvA family. Homotetramer. Forms an RuvA(8)-RuvB(12)-Holliday junction (HJ) complex. HJ DNA is sandwiched between 2 RuvA tetramers; dsDNA enters through RuvA and exits via RuvB. An RuvB hexamer assembles on each DNA strand where it exits the tetramer. Each RuvB hexamer is contacted by two RuvA subunits (via domain III) on 2 adjacent RuvB subunits; this complex drives branch migration. In the full resolvosome a probable DNA-RuvA(4)-RuvB(12)-RuvC(2) complex forms which resolves the HJ.

The protein localises to the cytoplasm. Functionally, the RuvA-RuvB-RuvC complex processes Holliday junction (HJ) DNA during genetic recombination and DNA repair, while the RuvA-RuvB complex plays an important role in the rescue of blocked DNA replication forks via replication fork reversal (RFR). RuvA specifically binds to HJ cruciform DNA, conferring on it an open structure. The RuvB hexamer acts as an ATP-dependent pump, pulling dsDNA into and through the RuvAB complex. HJ branch migration allows RuvC to scan DNA until it finds its consensus sequence, where it cleaves and resolves the cruciform DNA. The sequence is that of Holliday junction branch migration complex subunit RuvA from Leuconostoc mesenteroides subsp. mesenteroides (strain ATCC 8293 / DSM 20343 / BCRC 11652 / CCM 1803 / JCM 6124 / NCDO 523 / NBRC 100496 / NCIMB 8023 / NCTC 12954 / NRRL B-1118 / 37Y).